The chain runs to 81 residues: MEKISAFFVILFLVSSCLVTMSVGDICQTDRDCVEIGIPRCKRTGKMPICYNGYCCCICSAKRLPASTTRKPPSPSTSKLV.

The N-terminal stretch at 1 to 24 (MEKISAFFVILFLVSSCLVTMSVG) is a signal peptide. Intrachain disulfides connect C27/C50, C33/C57, and C41/C59.

The protein belongs to the DEFL family.

The protein localises to the secreted. The chain is Defensin-like protein 311 from Arabidopsis thaliana (Mouse-ear cress).